A 115-amino-acid polypeptide reads, in one-letter code: Nucleoid-associated protein tlr0723 (115 aa).

This sequence belongs to the YbaB/EbfC family. As to quaternary structure, homodimer.

It is found in the cytoplasm. The protein localises to the nucleoid. Its function is as follows. Binds to DNA and alters its conformation. May be involved in regulation of gene expression, nucleoid organization and DNA protection. This chain is Nucleoid-associated protein tlr0723, found in Thermosynechococcus vestitus (strain NIES-2133 / IAM M-273 / BP-1).